The chain runs to 182 residues: Ribosome maturation factor RimM (182 aa).

One can recognise a PRC barrel domain in the interval 103-182; sequence EGDYYWKDLM…SIEVDWDPGF (80 aa).

This sequence belongs to the RimM family. In terms of assembly, binds ribosomal protein uS19.

It localises to the cytoplasm. In terms of biological role, an accessory protein needed during the final step in the assembly of 30S ribosomal subunit, possibly for assembly of the head region. Essential for efficient processing of 16S rRNA. May be needed both before and after RbfA during the maturation of 16S rRNA. It has affinity for free ribosomal 30S subunits but not for 70S ribosomes. The sequence is that of Ribosome maturation factor RimM from Escherichia coli O139:H28 (strain E24377A / ETEC).